The sequence spans 68 residues: DNA-directed RNA polymerase subunit omega (68 aa).

It belongs to the RNA polymerase subunit omega family. In terms of assembly, the RNAP catalytic core consists of 2 alpha, 1 beta, 1 beta' and 1 omega subunit. When a sigma factor is associated with the core the holoenzyme is formed, which can initiate transcription.

It catalyses the reaction RNA(n) + a ribonucleoside 5'-triphosphate = RNA(n+1) + diphosphate. Its function is as follows. Promotes RNA polymerase assembly. Latches the N- and C-terminal regions of the beta' subunit thereby facilitating its interaction with the beta and alpha subunits. The sequence is that of DNA-directed RNA polymerase subunit omega from Geobacter sp. (strain M21).